The chain runs to 101 residues: MKDKGKLVIWPAYIDQTKSRSSGRIISRKNSIKEPHLNEIKEAARQLGLNPEVEPEKAYPKSWWEVSGRVLVDDNGPKSVIAKQIALAIKKMRGQEVPAKT.

It belongs to the SRP19 family. As to quaternary structure, part of the signal recognition particle protein translocation system, which is composed of SRP and FtsY. Archaeal SRP consists of a 7S RNA molecule of 300 nucleotides and two protein subunits: SRP54 and SRP19.

The protein localises to the cytoplasm. Functionally, involved in targeting and insertion of nascent membrane proteins into the cytoplasmic membrane. Binds directly to 7S RNA and mediates binding of the 54 kDa subunit of the SRP. The polypeptide is Signal recognition particle 19 kDa protein (Methanosarcina mazei (strain ATCC BAA-159 / DSM 3647 / Goe1 / Go1 / JCM 11833 / OCM 88) (Methanosarcina frisia)).